A 125-amino-acid polypeptide reads, in one-letter code: Protein MGF 110-7L (125 aa).

The N-terminal stretch at 1 to 20 is a signal peptide; the sequence is MLVIILGVIGLLASSNLVSS. Residues Asn69, Asn70, and Asn105 are each glycosylated (N-linked (GlcNAc...) asparagine; by host).

It belongs to the asfivirus MGF 110 family.

Its function is as follows. Plays a role in virus cell tropism, and may be required for efficient virus replication in macrophages. The sequence is that of Protein MGF 110-7L from Ornithodoros (relapsing fever ticks).